Here is a 302-residue protein sequence, read N- to C-terminus: CASP-like protein 4A2 (302 aa).

Over residues 1–13 (MALQAQQQATPSP) the composition is skewed to polar residues. Residues 1-134 (MALQAQQQAT…APPPHAQVRS (134 aa)) form a disordered region. The Cytoplasmic segment spans residues 1 to 154 (MALQAQQQAT…RKRRAAVMQR (154 aa)). Low complexity predominate over residues 40–60 (VVVASTHHAAAAARYVPPRAT). The span at 99 to 129 (KTPPPAPPLPAAPPPPPAASPAPAPRAPPPH) shows a compositional bias: pro residues. The chain crosses the membrane as a helical span at residues 155–175 (AALLARAAAAGLCLAALAVLA). Over 176 to 197 (SDTRRGWARDSYSNYAQFRYSE) the chain is Extracellular. The chain crosses the membrane as a helical span at residues 198–218 (AVNVVGFLYSVFQFVALAELM). Topologically, residues 219–238 (RRNKHLIPHPKRDLFDFTMD) are cytoplasmic. Residues 239–256 (QVVAYLLISSSSSATARA) form a helical membrane-spanning segment. Over 257 to 273 (SDLIENWGSDSFPSMAN) the chain is Extracellular. The chain crosses the membrane as a helical span at residues 274 to 294 (GSIAISFVAFVVFAICSLISA). The Cytoplasmic segment spans residues 295–302 (YNLFRRDM).

It belongs to the Casparian strip membrane proteins (CASP) family. In terms of assembly, homodimer and heterodimers.

The protein resides in the cell membrane. In Zea mays (Maize), this protein is CASP-like protein 4A2.